Consider the following 359-residue polypeptide: Fructose-bisphosphate aldolase (359 aa).

S62 is a binding site for D-glyceraldehyde 3-phosphate. D110 acts as the Proton donor in catalysis. Positions 111, 145, 175, and 227 each coordinate Zn(2+). G228 is a binding site for dihydroxyacetone phosphate. Zn(2+) is bound at residue H265. Residues 266–268 (GGS) and 287–290 (NIDT) each bind dihydroxyacetone phosphate.

Belongs to the class II fructose-bisphosphate aldolase family. Homodimer. Requires Zn(2+) as cofactor.

The catalysed reaction is beta-D-fructose 1,6-bisphosphate = D-glyceraldehyde 3-phosphate + dihydroxyacetone phosphate. The protein operates within carbohydrate degradation; glycolysis; D-glyceraldehyde 3-phosphate and glycerone phosphate from D-glucose: step 4/4. Catalyzes the aldol condensation of dihydroxyacetone phosphate (DHAP or glycerone-phosphate) with glyceraldehyde 3-phosphate (G3P) to form fructose 1,6-bisphosphate (FBP) in gluconeogenesis and the reverse reaction in glycolysis. The protein is Fructose-bisphosphate aldolase (fba) of Haemophilus influenzae (strain ATCC 51907 / DSM 11121 / KW20 / Rd).